Reading from the N-terminus, the 154-residue chain is Superoxide dismutase [Cu-Zn] (154 aa).

Cu cation-binding residues include H47, H49, and H64. A disulfide bond links C58 and C147. The Zn(2+) site is built by H64, H72, H81, and D84. Position 121 (H121) interacts with Cu cation. Residues D126 to K137 show a composition bias toward basic and acidic residues. The interval D126–C147 is disordered.

Belongs to the Cu-Zn superoxide dismutase family. In terms of assembly, homodimer. It depends on Cu cation as a cofactor. Zn(2+) serves as cofactor.

The protein resides in the cytoplasm. The enzyme catalyses 2 superoxide + 2 H(+) = H2O2 + O2. Destroys radicals which are normally produced within the cells and which are toxic to biological systems. Plays an important role in the phase transition, and may be important in vivo, as it would facilitate the intracellular survival of the fungus by providing a non-toxic environment in the macrophage phagolysosomes. In Talaromyces marneffei (Penicillium marneffei), this protein is Superoxide dismutase [Cu-Zn].